The sequence spans 303 residues: UDP-3-O-acyl-N-acetylglucosamine deacetylase (303 aa).

Zn(2+) is bound by residues H78, H237, and D241. H264 (proton donor) is an active-site residue.

This sequence belongs to the LpxC family. Requires Zn(2+) as cofactor.

It carries out the reaction a UDP-3-O-[(3R)-3-hydroxyacyl]-N-acetyl-alpha-D-glucosamine + H2O = a UDP-3-O-[(3R)-3-hydroxyacyl]-alpha-D-glucosamine + acetate. The protein operates within glycolipid biosynthesis; lipid IV(A) biosynthesis; lipid IV(A) from (3R)-3-hydroxytetradecanoyl-[acyl-carrier-protein] and UDP-N-acetyl-alpha-D-glucosamine: step 2/6. Its function is as follows. Catalyzes the hydrolysis of UDP-3-O-myristoyl-N-acetylglucosamine to form UDP-3-O-myristoylglucosamine and acetate, the committed step in lipid A biosynthesis. This chain is UDP-3-O-acyl-N-acetylglucosamine deacetylase, found in Coxiella burnetii (strain CbuG_Q212) (Coxiella burnetii (strain Q212)).